The following is a 427-amino-acid chain: Tol-Pal system protein TolB (427 aa).

The first 23 residues, 1-23 (MKLLKRLVSVFAIVLAVGSNAFA), serve as a signal peptide directing secretion.

This sequence belongs to the TolB family. In terms of assembly, the Tol-Pal system is composed of five core proteins: the inner membrane proteins TolA, TolQ and TolR, the periplasmic protein TolB and the outer membrane protein Pal. They form a network linking the inner and outer membranes and the peptidoglycan layer.

Its subcellular location is the periplasm. In terms of biological role, part of the Tol-Pal system, which plays a role in outer membrane invagination during cell division and is important for maintaining outer membrane integrity. The polypeptide is Tol-Pal system protein TolB (Haemophilus influenzae (strain PittGG)).